Here is a 799-residue protein sequence, read N- to C-terminus: MRSPSLARLQTRAVFGLTRSARFQPQTLLRQRCASTAAFRSAAVAPAYQSKLGQWDQRRNASAAASAVLEAAKVNPDGLSQTAIIDNLDPVEAARLDKCRNIGIAAHIDSGKTTCTERVLFYTGRIKAIHEVRGRDSVGAKMDSMDLEREKGITIQSAATFCDWVKKDKEGVEQKYHLNLIDTPGHIDFTIEVERALRVLDGAVMILCAVSGVQSQTITVDRQMRRYNVPRISFVNKMDRMGANPFKAVDQINNKLKMPAAAVQVPIGAEDEFEGVVDLIRMKALYNVGGSGEEIMEKDEIPEKVKAIAEERRTMLIETLADVDDEIAEIFLEELTPSEDQIRAAIRRATIGLKFTPVFMGSALANKSVQPMLDGVIDYLPNPAEVENLALDQKREEASVKLVPYNSLPFVGLAFKLEESNFGQLTYIRVYQGTLRKGANVFNARNSKKVKVPRIVRMHSNDMEEVSEIGAGEICAVFGIECASGDTFTDGTLGYSMSSMFVPEPVVSLSIKPKQSKDGANFSKAMARFQREDPTFRVSYDSESDQTIISGMGELHLDIYVERMRREYRVDCETGQPQVAYRETIGNRVEFDHLLKKQSGGPGEFARVMGYMEPTGALEENKFEQQVIGGSISEKFLYACEKGFNLSCEKGPLIGHKVLGTRMVINDGATHMTDSSEMSFKNATQQAFRKAFAESQPSVLEPLMKTVVTAPTEFQGDVIGLLNKRNATINDTETGVDEFTVHADCSLNGMFGFSSNLRAATQGKGEYTMEFSHYEKAPPHMQKELIAKYVKAQADRHKK.

A mitochondrion-targeting transit peptide spans 1-33; the sequence is MRSPSLARLQTRAVFGLTRSARFQPQTLLRQRC. One can recognise a tr-type G domain in the interval 97–384; it reads DKCRNIGIAA…GVIDYLPNPA (288 aa). GTP is bound by residues 106 to 113, 182 to 186, and 236 to 239; these read AHIDSGKT, DTPGH, and NKMD.

This sequence belongs to the TRAFAC class translation factor GTPase superfamily. Classic translation factor GTPase family. EF-G/EF-2 subfamily.

The protein resides in the mitochondrion. It participates in protein biosynthesis; polypeptide chain elongation. Mitochondrial GTPase that catalyzes the GTP-dependent ribosomal translocation step during translation elongation. During this step, the ribosome changes from the pre-translocational (PRE) to the post-translocational (POST) state as the newly formed A-site-bound peptidyl-tRNA and P-site-bound deacylated tRNA move to the P and E sites, respectively. Catalyzes the coordinated movement of the two tRNA molecules, the mRNA and conformational changes in the ribosome. In Penicillium rubens (strain ATCC 28089 / DSM 1075 / NRRL 1951 / Wisconsin 54-1255) (Penicillium chrysogenum), this protein is Elongation factor G, mitochondrial (mef1).